Consider the following 261-residue polypeptide: 5-oxoprolinase subunit A (261 aa).

The protein belongs to the LamB/PxpA family. As to quaternary structure, forms a complex composed of PxpA, PxpB and PxpC.

It catalyses the reaction 5-oxo-L-proline + ATP + 2 H2O = L-glutamate + ADP + phosphate + H(+). In terms of biological role, catalyzes the cleavage of 5-oxoproline to form L-glutamate coupled to the hydrolysis of ATP to ADP and inorganic phosphate. The sequence is that of 5-oxoprolinase subunit A from Coprothermobacter proteolyticus (strain ATCC 35245 / DSM 5265 / OCM 4 / BT).